A 100-amino-acid polypeptide reads, in one-letter code: A-type ATP synthase subunit F (100 aa).

It belongs to the V-ATPase F subunit family. Has multiple subunits with at least A(3), B(3), C, D, E, F, H, I and proteolipid K(x).

The protein resides in the cell membrane. Its function is as follows. Component of the A-type ATP synthase that produces ATP from ADP in the presence of a proton gradient across the membrane. This is A-type ATP synthase subunit F from Methanospirillum hungatei JF-1 (strain ATCC 27890 / DSM 864 / NBRC 100397 / JF-1).